The primary structure comprises 1017 residues: uncharacterized protein (1017 aa).

A signal peptide (tat-type signal) is located at residues 1 to 34; the sequence is MGNLTMSRRTFVKTAAITGAAAAAFGASTHTALA. A 4Fe-4S Mo/W bis-MGD-type domain is found at 45–103; that stretch reads DTVAVKTCCRGCGKMECGVKVIVQNGRAIRVEGDEGAFQSMGNCCTKSQSSIQAAYHPD. Residues cysteine 53, cysteine 56, cysteine 61, and cysteine 89 each coordinate [4Fe-4S] cluster. Lysine 91 (electron donor/acceptor) is an active-site residue.

This sequence belongs to the prokaryotic molybdopterin-containing oxidoreductase family. Requires [4Fe-4S] cluster as cofactor. Mo-bis(molybdopterin guanine dinucleotide) is required as a cofactor. In terms of processing, predicted to be exported by the Tat system. The position of the signal peptide cleavage has not been experimentally proven.

This is an uncharacterized protein from Eggerthella lenta (strain ATCC 25559 / DSM 2243 / CCUG 17323 / JCM 9979 / KCTC 3265 / NCTC 11813 / VPI 0255 / 1899 B) (Eubacterium lentum).